The following is a 22-amino-acid chain: Recombination and repair protein (22 aa).

This sequence belongs to the RecA family.

Its function is as follows. Important in genetic recombination, DNA repair, and replication. Possesses pairing and strand-transfer activity. Interacts with dda and gene 32 proteins. This chain is Recombination and repair protein (UVSX), found in Escherichia coli (Bacteriophage T2).